Reading from the N-terminus, the 548-residue chain is Non-structural protein NS1 (548 aa).

The protein belongs to the orbivirus non-structural protein NS1 family.

This Camelus dromedarius (Dromedary) protein is Non-structural protein NS1 (Segment-5).